The following is a 250-amino-acid chain: UPF0758 protein tlr1707 (250 aa).

The MPN domain occupies 116–239 (TIIDSPALAA…YQSLREITPL (124 aa)). Zn(2+)-binding residues include His-188, His-190, and Asp-201. Residues 188-201 (HNHPSGNLSPSQAD) carry the JAMM motif motif.

It belongs to the UPF0758 family.

This chain is UPF0758 protein tlr1707, found in Thermosynechococcus vestitus (strain NIES-2133 / IAM M-273 / BP-1).